The chain runs to 358 residues: Protein-glutamate methylesterase/protein-glutamine glutaminase 1 (358 aa).

One can recognise a Response regulatory domain in the interval 8 to 125; that stretch reads RVLIVDDSAV…ARGLEGYAEE (118 aa). Asp59 is modified (4-aspartylphosphate). A CheB-type methylesterase domain is found at 165-352; the sequence is FRTTDRLIAI…LDRVAERLLA (188 aa). Residues Ser177, His203, and Asp299 contribute to the active site.

It belongs to the CheB family. Phosphorylated by CheA. Phosphorylation of the N-terminal regulatory domain activates the methylesterase activity.

It is found in the cytoplasm. The enzyme catalyses [protein]-L-glutamate 5-O-methyl ester + H2O = L-glutamyl-[protein] + methanol + H(+). It catalyses the reaction L-glutaminyl-[protein] + H2O = L-glutamyl-[protein] + NH4(+). In terms of biological role, involved in chemotaxis. Part of a chemotaxis signal transduction system that modulates chemotaxis in response to various stimuli. Catalyzes the demethylation of specific methylglutamate residues introduced into the chemoreceptors (methyl-accepting chemotaxis proteins or MCP) by CheR. Also mediates the irreversible deamidation of specific glutamine residues to glutamic acid. The sequence is that of Protein-glutamate methylesterase/protein-glutamine glutaminase 1 from Xanthomonas axonopodis pv. citri (strain 306).